Here is a 202-residue protein sequence, read N- to C-terminus: Outer-membrane lipoprotein carrier protein (202 aa).

The signal sequence occupies residues 1 to 18 (MNKLFLILLLIFSHEVFS).

It belongs to the LolA family. In terms of assembly, monomer.

Its subcellular location is the periplasm. Its function is as follows. Participates in the translocation of lipoproteins from the inner membrane to the outer membrane. Only forms a complex with a lipoprotein if the residue after the N-terminal Cys is not an aspartate (The Asp acts as a targeting signal to indicate that the lipoprotein should stay in the inner membrane). The sequence is that of Outer-membrane lipoprotein carrier protein from Legionella pneumophila (strain Paris).